The chain runs to 434 residues: Tol-Pal system protein TolB (434 aa).

The signal sequence occupies residues 1 to 28 (MQQTCKRKIWMQISVALVTSLWMISAQA).

Belongs to the TolB family. In terms of assembly, the Tol-Pal system is composed of five core proteins: the inner membrane proteins TolA, TolQ and TolR, the periplasmic protein TolB and the outer membrane protein Pal. They form a network linking the inner and outer membranes and the peptidoglycan layer.

It localises to the periplasm. In terms of biological role, part of the Tol-Pal system, which plays a role in outer membrane invagination during cell division and is important for maintaining outer membrane integrity. The sequence is that of Tol-Pal system protein TolB from Alcanivorax borkumensis (strain ATCC 700651 / DSM 11573 / NCIMB 13689 / SK2).